We begin with the raw amino-acid sequence, 486 residues long: Phosphomethylpyrimidine synthase (486 aa).

Substrate-binding positions include asparagine 80, methionine 109, tyrosine 139, histidine 175, 195–197 (SRG), 236–239 (DSLR), and glutamate 275. A Zn(2+)-binding site is contributed by histidine 279. Substrate is bound at residue tyrosine 329. Histidine 370 contacts Zn(2+). [4Fe-4S] cluster is bound by residues cysteine 450, cysteine 453, and cysteine 458.

It belongs to the ThiC family. The cofactor is [4Fe-4S] cluster.

It catalyses the reaction 5-amino-1-(5-phospho-beta-D-ribosyl)imidazole + S-adenosyl-L-methionine = 4-amino-2-methyl-5-(phosphooxymethyl)pyrimidine + CO + 5'-deoxyadenosine + formate + L-methionine + 3 H(+). Its pathway is cofactor biosynthesis; thiamine diphosphate biosynthesis. Catalyzes the synthesis of the hydroxymethylpyrimidine phosphate (HMP-P) moiety of thiamine from aminoimidazole ribotide (AIR) in a radical S-adenosyl-L-methionine (SAM)-dependent reaction. This is Phosphomethylpyrimidine synthase from Trichodesmium erythraeum (strain IMS101).